A 552-amino-acid polypeptide reads, in one-letter code: Carboxypeptidase Y homolog A (552 aa).

The signal sequence occupies residues 1-17 (MRVLPATLLVGAATAAT). The propeptide occupies 18–133 (PAQQVLGGLQ…KLEAYDLRIK (116 aa)). Intrachain disulfides connect C188–C428, C322–C336, C346–C369, C353–C362, and C391–C398. N219 carries N-linked (GlcNAc...) asparagine glycosylation. Residue S275 is part of the active site. D467 is a catalytic residue. An N-linked (GlcNAc...) asparagine glycan is attached at N518. H529 is an active-site residue.

The protein belongs to the peptidase S10 family.

The protein localises to the vacuole. The enzyme catalyses Release of a C-terminal amino acid with broad specificity.. Vacuolar carboxypeptidase involved in degradation of small peptides. Digests preferentially peptides containing an aliphatic or hydrophobic residue in P1' position, as well as methionine, leucine or phenylalanine in P1 position of ester substrate. The sequence is that of Carboxypeptidase Y homolog A (cpyA) from Emericella nidulans (strain FGSC A4 / ATCC 38163 / CBS 112.46 / NRRL 194 / M139) (Aspergillus nidulans).